A 232-amino-acid polypeptide reads, in one-letter code: MSLTDTIRNTFVPIHREGYPFIAGFFVVSLILGWLWDPLFWIGMVLTVWCIYFYRDPERVTPMDDDLVISPADGKVSFVGLAVPPAELDLGYEPMTRVSVFMNVFSVHINRSPVRGKIDKVVHRPGKFLNAELDKASTENERNSVLIESPHGKVGVVQIAGLVARRIVCWSNQDDELSVGERFGLIRFGSRVDVYLPSDATVRVAVGQTAIAGETVLADYGTERGEPVVRIA.

The active-site Schiff-base intermediate with substrate; via pyruvic acid is serine 190. Serine 190 bears the Pyruvic acid (Ser); by autocatalysis mark.

The protein belongs to the phosphatidylserine decarboxylase family. PSD-A subfamily. As to quaternary structure, heterodimer of a large membrane-associated beta subunit and a small pyruvoyl-containing alpha subunit. Pyruvate serves as cofactor. Post-translationally, is synthesized initially as an inactive proenzyme. Formation of the active enzyme involves a self-maturation process in which the active site pyruvoyl group is generated from an internal serine residue via an autocatalytic post-translational modification. Two non-identical subunits are generated from the proenzyme in this reaction, and the pyruvate is formed at the N-terminus of the alpha chain, which is derived from the carboxyl end of the proenzyme. The post-translation cleavage follows an unusual pathway, termed non-hydrolytic serinolysis, in which the side chain hydroxyl group of the serine supplies its oxygen atom to form the C-terminus of the beta chain, while the remainder of the serine residue undergoes an oxidative deamination to produce ammonia and the pyruvoyl prosthetic group on the alpha chain.

The protein localises to the cell membrane. The enzyme catalyses a 1,2-diacyl-sn-glycero-3-phospho-L-serine + H(+) = a 1,2-diacyl-sn-glycero-3-phosphoethanolamine + CO2. It functions in the pathway phospholipid metabolism; phosphatidylethanolamine biosynthesis; phosphatidylethanolamine from CDP-diacylglycerol: step 2/2. In terms of biological role, catalyzes the formation of phosphatidylethanolamine (PtdEtn) from phosphatidylserine (PtdSer). This Brucella canis (strain ATCC 23365 / NCTC 10854 / RM-666) protein is Phosphatidylserine decarboxylase proenzyme.